The chain runs to 86 residues: Large ribosomal subunit protein bL31 (86 aa).

Residues 66 to 86 form a disordered region; that stretch reads GMGSADSATSQETKEAKESDK. A compositionally biased stretch (basic and acidic residues) spans 77 to 86; it reads ETKEAKESDK.

The protein belongs to the bacterial ribosomal protein bL31 family. Type A subfamily. In terms of assembly, part of the 50S ribosomal subunit.

Its function is as follows. Binds the 23S rRNA. The chain is Large ribosomal subunit protein bL31 from Prochlorococcus marinus (strain MIT 9515).